Consider the following 140-residue polypeptide: Protein PsiE homolog (140 aa).

4 consecutive transmembrane segments (helical) span residues 16–36 (IVLQ…LSVF), 57–77 (YHLI…VMII), 85–105 (HFPL…LIII), and 110–130 (PLDL…LFIA).

It belongs to the PsiE family.

It localises to the cell membrane. This chain is Protein PsiE homolog, found in Bacillus cereus (strain ATCC 14579 / DSM 31 / CCUG 7414 / JCM 2152 / NBRC 15305 / NCIMB 9373 / NCTC 2599 / NRRL B-3711).